A 207-amino-acid chain; its full sequence is ATP-dependent Clp protease proteolytic subunit (207 aa).

The Nucleophile role is filled by serine 111. Histidine 136 is a catalytic residue.

This sequence belongs to the peptidase S14 family. In terms of assembly, fourteen ClpP subunits assemble into 2 heptameric rings which stack back to back to give a disk-like structure with a central cavity, resembling the structure of eukaryotic proteasomes. Component of the ClpAP and ClpXP complexes.

The protein localises to the cytoplasm. The enzyme catalyses Hydrolysis of proteins to small peptides in the presence of ATP and magnesium. alpha-casein is the usual test substrate. In the absence of ATP, only oligopeptides shorter than five residues are hydrolyzed (such as succinyl-Leu-Tyr-|-NHMec, and Leu-Tyr-Leu-|-Tyr-Trp, in which cleavage of the -Tyr-|-Leu- and -Tyr-|-Trp bonds also occurs).. In terms of biological role, cleaves peptides in various proteins in a process that requires ATP hydrolysis. Has a chymotrypsin-like activity. Plays a major role in the degradation of misfolded proteins. This is ATP-dependent Clp protease proteolytic subunit from Salmonella enteritidis PT4 (strain P125109).